A 278-amino-acid polypeptide reads, in one-letter code: Phosphonates import ATP-binding protein PhnC 2 (278 aa).

The ABC transporter domain maps to 5–253 (IRVDSLNKTF…FLNELYGAEG (249 aa)). 37–44 (GASGSGKS) contributes to the ATP binding site.

It belongs to the ABC transporter superfamily. Phosphonates importer (TC 3.A.1.9.1) family. As to quaternary structure, the complex is composed of two ATP-binding proteins (PhnC), two transmembrane proteins (PhnE) and a solute-binding protein (PhnD).

It localises to the cell inner membrane. The enzyme catalyses phosphonate(out) + ATP + H2O = phosphonate(in) + ADP + phosphate + H(+). Its function is as follows. Part of the ABC transporter complex PhnCDE involved in phosphonates import. Responsible for energy coupling to the transport system. The chain is Phosphonates import ATP-binding protein PhnC 2 from Pseudomonas aeruginosa (strain ATCC 15692 / DSM 22644 / CIP 104116 / JCM 14847 / LMG 12228 / 1C / PRS 101 / PAO1).